The following is a 409-amino-acid chain: Cuticle-degrading serine protease (409 aa).

Residues 1 to 21 form the signal peptide; the sequence is MLTNGLISLLAIAGLATNAFA. The propeptide occupies 22-123; it reads GPIRKVSNAG…VEQDTVVTTY (102 aa). Positions 39 to 122 constitute an Inhibitor I9 domain; the sequence is KYIVVLKKGL…YVEQDTVVTT (84 aa). A Peptidase S8 domain is found at 130–409; the sequence is TWGLDRISHE…PNKIAYNGYA (280 aa). Aspartate 164 (charge relay system) is an active-site residue. Asparagine 178 carries an N-linked (GlcNAc...) asparagine glycan. The active-site Charge relay system is histidine 200. An N-linked (GlcNAc...) asparagine glycan is attached at asparagine 252. Residue serine 353 is the Charge relay system of the active site.

It belongs to the peptidase S8 family.

It is found in the secreted. Its activity is regulated as follows. Inhibited by PMSF, SSI, the peptide Phe-Val and by Phe, but not by EDTA. Functionally, hydrolyzes gelatin, casein, the chromogenic substrate azocoll and the cuticle of the nematode P.redivivus. Immobilizes P.redivivus. This is Cuticle-degrading serine protease from Arthrobotrys oligospora (strain ATCC 24927 / CBS 115.81 / DSM 1491) (Nematode-trapping fungus).